Here is a 393-residue protein sequence, read N- to C-terminus: Rhizopuspepsin (393 aa).

The N-terminal stretch at 1–21 is a signal peptide; sequence MKFTLISSCIAIAALAVAVDA. Positions 22 to 68 are cleaved as a propeptide — activation peptide; it reads APGEKKISIPLAKNPNYKPSAKNAIQKAIAKYNKHKINTSTGGIVPD. The Peptidase A1 domain occupies 85–389; the sequence is YYGQVTIGTP…NQGVPEVQIA (305 aa). Residue aspartate 103 is part of the active site. Cysteine 116 and cysteine 119 are disulfide-bonded. Aspartate 286 is an active-site residue. A disulfide bridge links cysteine 320 with cysteine 353.

This sequence belongs to the peptidase A1 family.

The enzyme catalyses Hydrolysis of proteins with broad specificity similar to that of pepsin A, preferring hydrophobic residues at P1 and P1'. Clots milk and activates trypsinogen. Does not cleave 4-Gln-|-His-5, but does cleave 10-His-|-Leu-11 and 12-Val-|-Glu-13 in B chain of insulin.. The sequence is that of Rhizopuspepsin from Rhizopus chinensis (Bread mold).